Reading from the N-terminus, the 206-residue chain is Probable glutathione S-transferase 6 (206 aa).

The 78-residue stretch at 2-79 (VHYKLVYFPL…YLAREFGIAG (78 aa)) folds into the GST N-terminal domain. Residues Tyr8, Trp39, Lys43, 49–51 (GQL), and 63–64 (QS) contribute to the glutathione site. The region spanning 81–206 (NDTEAAEVDA…YIANRPDYPF (126 aa)) is the GST C-terminal domain.

It belongs to the GST superfamily. Sigma family.

It catalyses the reaction RX + glutathione = an S-substituted glutathione + a halide anion + H(+). Its function is as follows. Conjugation of reduced glutathione to a wide number of exogenous and endogenous hydrophobic electrophiles. This is Probable glutathione S-transferase 6 (gst-6) from Caenorhabditis elegans.